A 282-amino-acid polypeptide reads, in one-letter code: Acetylglutamate kinase (282 aa).

Residues 62 to 63 (GG), Arg84, and Asn178 contribute to the substrate site.

The protein belongs to the acetylglutamate kinase family. ArgB subfamily.

Its subcellular location is the cytoplasm. The enzyme catalyses N-acetyl-L-glutamate + ATP = N-acetyl-L-glutamyl 5-phosphate + ADP. It participates in amino-acid biosynthesis; L-arginine biosynthesis; N(2)-acetyl-L-ornithine from L-glutamate: step 2/4. Its function is as follows. Catalyzes the ATP-dependent phosphorylation of N-acetyl-L-glutamate. The polypeptide is Acetylglutamate kinase (Thermotoga petrophila (strain ATCC BAA-488 / DSM 13995 / JCM 10881 / RKU-1)).